The primary structure comprises 859 residues: Probable helicase A859L (859 aa).

The region spanning 178–349 (YQELQRSGRA…KNRELFGGVA (172 aa)) is the Helicase ATP-binding domain. 191-198 (MACRCGKT) lines the ATP pocket. The DEAH box signature appears at 298–301 (DECH). In terms of domain architecture, Helicase C-terminal spans 394–553 (QIIMALAYLK…RFYEHLLNPS (160 aa)).

The protein belongs to the asfivirus helicase A859L family.

The chain is Probable helicase A859L from African swine fever virus (isolate Pig/Kenya/KEN-50/1950) (ASFV).